Here is a 99-residue protein sequence, read N- to C-terminus: MTTYQVRLINKKRAIDITIPVDENTTILDAAEQQDIELPFSCQSGSCSSCVAKVVEGEVDQSEQVFLDEEQMAKGFIVLCVSYPRSDCTIRTHQEPYLV.

One can recognise a 2Fe-2S ferredoxin-type domain in the interval 4–96 (YQVRLINKKR…DCTIRTHQEP (93 aa)). [2Fe-2S] cluster is bound by residues Cys-42, Cys-47, Cys-50, and Cys-80.

Belongs to the 2Fe2S plant-type ferredoxin family. The cofactor is [2Fe-2S] cluster.

Functionally, ferredoxins are iron-sulfur proteins that transfer electrons in a wide variety of metabolic reactions. Donates electrons to the nitrogenase 2. The polypeptide is Ferredoxin, vegetative (fdxH2) (Trichormus variabilis (strain ATCC 29413 / PCC 7937) (Anabaena variabilis)).